An 87-amino-acid polypeptide reads, in one-letter code: Costars family protein (87 aa).

This sequence belongs to the costars family.

The sequence is that of Costars family protein from Oryza sativa subsp. indica (Rice).